The primary structure comprises 227 residues: Large ribosomal subunit protein uL3 (227 aa).

It belongs to the universal ribosomal protein uL3 family. As to quaternary structure, part of the 50S ribosomal subunit. Forms a cluster with proteins L14 and L19.

One of the primary rRNA binding proteins, it binds directly near the 3'-end of the 23S rRNA, where it nucleates assembly of the 50S subunit. In Leuconostoc citreum (strain KM20), this protein is Large ribosomal subunit protein uL3.